An 86-amino-acid polypeptide reads, in one-letter code: Cytochrome c oxidase subunit 6B1 (86 aa).

Alanine 2 is modified (N-acetylalanine). Positions 27–73 constitute a CHCH domain; sequence TRNCWQNYLDFHRCEKAMTAKGGDVSVCEWYRRVYKSLCPISWVSTW. Residues 30-40 carry the Cx9C motif motif; the sequence is CWQNYLDFHRC. Cystine bridges form between cysteine 30–cysteine 65 and cysteine 40–cysteine 54. Residues 54–65 carry the Cx10C motif motif; it reads CEWYRRVYKSLC. Lysine 62 carries the post-translational modification N6-acetyllysine.

The protein belongs to the cytochrome c oxidase subunit 6B family. Component of the cytochrome c oxidase (complex IV, CIV), a multisubunit enzyme composed of 14 subunits. The complex is composed of a catalytic core of 3 subunits MT-CO1, MT-CO2 and MT-CO3, encoded in the mitochondrial DNA, and 11 supernumerary subunits COX4I, COX5A, COX5B, COX6A, COX6B, COX6C, COX7A, COX7B, COX7C, COX8 and NDUFA4, which are encoded in the nuclear genome. The complex exists as a monomer or a dimer and forms supercomplexes (SCs) in the inner mitochondrial membrane with NADH-ubiquinone oxidoreductase (complex I, CI) and ubiquinol-cytochrome c oxidoreductase (cytochrome b-c1 complex, complex III, CIII), resulting in different assemblies (supercomplex SCI(1)III(2)IV(1) and megacomplex MCI(2)III(2)IV(2)).

The protein localises to the mitochondrion inner membrane. The protein operates within energy metabolism; oxidative phosphorylation. Functionally, component of the cytochrome c oxidase, the last enzyme in the mitochondrial electron transport chain which drives oxidative phosphorylation. The respiratory chain contains 3 multisubunit complexes succinate dehydrogenase (complex II, CII), ubiquinol-cytochrome c oxidoreductase (cytochrome b-c1 complex, complex III, CIII) and cytochrome c oxidase (complex IV, CIV), that cooperate to transfer electrons derived from NADH and succinate to molecular oxygen, creating an electrochemical gradient over the inner membrane that drives transmembrane transport and the ATP synthase. Cytochrome c oxidase is the component of the respiratory chain that catalyzes the reduction of oxygen to water. Electrons originating from reduced cytochrome c in the intermembrane space (IMS) are transferred via the dinuclear copper A center (CU(A)) of subunit 2 and heme A of subunit 1 to the active site in subunit 1, a binuclear center (BNC) formed by heme A3 and copper B (CU(B)). The BNC reduces molecular oxygen to 2 water molecules using 4 electrons from cytochrome c in the IMS and 4 protons from the mitochondrial matrix. The protein is Cytochrome c oxidase subunit 6B1 (COX6B1) of Carlito syrichta (Philippine tarsier).